A 444-amino-acid polypeptide reads, in one-letter code: Chromosome partition protein MukF (444 aa).

The leucine-zipper stretch occupies residues 211 to 239; the sequence is LDETSGNLRELQDTLNAAGDKLQAQLLRI.

It belongs to the MukF family. In terms of assembly, interacts, and probably forms a ternary complex, with MukE and MukB via its C-terminal region. The complex formation is stimulated by calcium or magnesium. It is required for an interaction between MukE and MukB.

The protein localises to the cytoplasm. It localises to the nucleoid. Functionally, involved in chromosome condensation, segregation and cell cycle progression. May participate in facilitating chromosome segregation by condensation DNA from both sides of a centrally located replisome during cell division. Not required for mini-F plasmid partitioning. Probably acts via its interaction with MukB and MukE. Overexpression results in anucleate cells. It has a calcium binding activity. The polypeptide is Chromosome partition protein MukF (Actinobacillus succinogenes (strain ATCC 55618 / DSM 22257 / CCUG 43843 / 130Z)).